Here is a 378-residue protein sequence, read N- to C-terminus: Alcohol dehydrogenase class-3 (378 aa).

A1 carries the post-translational modification N-acetylalanine. C46 is a Zn(2+) binding site. NAD(+) is bound at residue H47. An alcohol contacts are provided by T48 and H68. Zn(2+) is bound by residues H68, E69, C98, C101, C104, C112, and C176. NAD(+) contacts are provided by residues 201-206 (GLGTVG), D225, K230, 294-296 (VGV), 319-321 (TAF), and R371.

This sequence belongs to the zinc-containing alcohol dehydrogenase family. Class-III subfamily. As to quaternary structure, homodimer. Zn(2+) serves as cofactor.

The protein localises to the cytoplasm. The catalysed reaction is a primary alcohol + NAD(+) = an aldehyde + NADH + H(+). The enzyme catalyses a secondary alcohol + NAD(+) = a ketone + NADH + H(+). It catalyses the reaction S-(hydroxymethyl)glutathione + NADP(+) = S-formylglutathione + NADPH + H(+). It carries out the reaction S-(hydroxymethyl)glutathione + NAD(+) = S-formylglutathione + NADH + H(+). Its function is as follows. Class-III ADH is remarkably ineffective in oxidizing ethanol, but it readily catalyzes the oxidation of long-chain primary alcohols and the oxidation of S-(hydroxymethyl) glutathione. The polypeptide is Alcohol dehydrogenase class-3 (Pisum sativum (Garden pea)).